Reading from the N-terminus, the 22-residue chain is Brevinin-1OKa (22 aa).

Residue Lys-22 is modified to Lysine amide.

As to expression, expressed by the skin glands.

The protein resides in the secreted. Its function is as follows. Antimicrobial peptide. Active against Gram-negative bacterium E.coli (MIC=12.5 uM) and against Gram-positive bacterium S.aureus (MIC=12.5 uM). This is Brevinin-1OKa from Nidirana okinavana (Kampira Falls frog).